The chain runs to 340 residues: Immunoglobulin-binding protein 1 family member C (340 aa).

Disordered regions lie at residues 223 to 243 (KDSS…PPMK) and 292 to 340 (PEEF…QNMG). Acidic residues predominate over residues 303–314 (EDQEKEEEDDEQ). A compositionally biased stretch (basic and acidic residues) spans 318-330 (RAREWDDWKDTHP).

It belongs to the IGBP1/TAP42 family.

The polypeptide is Immunoglobulin-binding protein 1 family member C (Homo sapiens (Human)).